A 459-amino-acid chain; its full sequence is Probable rhamnogalacturonase C (459 aa).

An N-terminal signal peptide occupies residues 1 to 18 (MRASILPLTLFLATLAGA). Asparagine 36, asparagine 64, asparagine 77, asparagine 140, and asparagine 155 each carry an N-linked (GlcNAc...) asparagine glycan. Cysteine 39 and cysteine 65 are joined by a disulfide. Residue aspartate 216 is the Proton donor of the active site. Cysteine 218 and cysteine 235 form a disulfide bridge. N-linked (GlcNAc...) asparagine glycans are attached at residues asparagine 236 and asparagine 251. Histidine 290 is a catalytic residue. N-linked (GlcNAc...) asparagine glycosylation is present at asparagine 315. A disulfide bridge links cysteine 337 with cysteine 343. Asparagine 356 is a glycosylation site (N-linked (GlcNAc...) asparagine). Cysteines 365 and 374 form a disulfide.

Belongs to the glycosyl hydrolase 28 family.

It is found in the secreted. In terms of biological role, pectinolytic enzymes consist of four classes of enzymes: pectine lyase, polygalacturonase, pectin methylesterase and rhamnogalacturonase. Hydrolyzes alpha-D-galacturonopyranosyl-(1,2)-alpha-L-rhamnopyranosyl linkages in the backbone of the hairy regions of pectins. This Aspergillus niger (strain ATCC MYA-4892 / CBS 513.88 / FGSC A1513) protein is Probable rhamnogalacturonase C (rhgC).